The following is a 229-amino-acid chain: Ribonuclease 3 (229 aa).

In terms of domain architecture, RNase III spans 5 to 134 (EQKLEQDFGI…FLGALYLDQG (130 aa)). Residue E47 coordinates Mg(2+). Residue D51 is part of the active site. Mg(2+) contacts are provided by D120 and E123. E123 is an active-site residue. Positions 160-229 (DYKTALQERL…AKSALEQLGN (70 aa)) constitute a DRBM domain.

The protein belongs to the ribonuclease III family. In terms of assembly, homodimer. Mg(2+) serves as cofactor.

It localises to the cytoplasm. It carries out the reaction Endonucleolytic cleavage to 5'-phosphomonoester.. Functionally, digests double-stranded RNA. Involved in the processing of primary rRNA transcript to yield the immediate precursors to the large and small rRNAs (23S and 16S). Also processes some mRNAs, and tRNAs when they are encoded in the rRNA operon. In terms of biological role, CRISPR (clustered regularly interspaced short palindromic repeat) is an adaptive immune system that provides protection against mobile genetic elements (viruses, transposable elements and conjugative plasmids). CRISPR clusters contain spacers, sequences complementary to antecedent mobile elements, and target invading nucleic acids. CRISPR clusters are transcribed and processed into CRISPR RNA (crRNA). In this organism endogenous ribonuclease 3 and Cas9 are required for correct coprocessing of pre-crRNA and the trans-encoded small RNA (tracrRNA). Cas9, crRNA and tracrRNA are required for cleavage of invading DNA. Complements pre-crRNA and tracRNA coprocessing defects in an rnc deletion in S.pyogenes strain 370. The polypeptide is Ribonuclease 3 (Streptococcus thermophilus (strain ATCC BAA-491 / LMD-9)).